The sequence spans 393 residues: MASKENIADNMEKFSLKSPSKKILTDSTNNVRKMSIGHEANGQLAKESSTVNGIGKSANSLMEKSVTPFDPSLEPLLRENPRRFVIFPIQYHDIWQMYKKAEASFWTVEEVDLSKDLTDWHRLKDDERHFISHVLAFFAASDGIVNENLVERFSQEVQITEARCFYGFQIAMENVHSEMYSVLIDTYIRDPHQREYLFNAIETMPAVKRKADWALSWISSKSANFGERIIAFAAVEGIFFSGSFASIFWLKKRGLMPGLTFSNELISRDEGLHCDFAVLMFQHLVQRPKRERIIEIIRDAVAIEQEFLTDALPVNLIGMNCDLMSQYIEFVADRLLVELGVGKIYNTKNPFNFMEMISLDGKTNFFEKKVGEYQRMGVVSNPLDNVFTLDADF.

Ser-18 is subject to Phosphoserine. The Fe cation site is built by Asp-142, Glu-173, and His-176. Residue Tyr-180 is part of the active site. Positions 236, 270, and 273 each coordinate Fe cation.

This sequence belongs to the ribonucleoside diphosphate reductase small chain family. As to quaternary structure, heterodimer of a large and a small subunit. It depends on Fe cation as a cofactor.

It is found in the cytoplasm. It carries out the reaction a 2'-deoxyribonucleoside 5'-diphosphate + [thioredoxin]-disulfide + H2O = a ribonucleoside 5'-diphosphate + [thioredoxin]-dithiol. In terms of biological role, provides the precursors necessary for DNA synthesis. Catalyzes the biosynthesis of deoxyribonucleotides from the corresponding ribonucleotides. The polypeptide is Ribonucleoside-diphosphate reductase subunit M2 (RnrS) (Drosophila melanogaster (Fruit fly)).